The chain runs to 207 residues: MSKAILLDKKLQQSNELALPERYAQIKEHNLYLYVKSYLSSLRANSASAKKRGEVSGGGKKPWKQKGGGRARAGSITSPVFVGGGVSHGPSNDKNYTLKINKKQKRLALECALFQKAQEGKLFVVDSLAMPSGKTKDAYAMFKALKQRSTLFVAQMSDEPTFLAFRNLQQCYLADANELNAYLVAAFRSVVIEKAVFDEIIAEKKGE.

The interval 49–73 (AKKRGEVSGGGKKPWKQKGGGRARA) is disordered.

It belongs to the universal ribosomal protein uL4 family. In terms of assembly, part of the 50S ribosomal subunit.

Its function is as follows. One of the primary rRNA binding proteins, this protein initially binds near the 5'-end of the 23S rRNA. It is important during the early stages of 50S assembly. It makes multiple contacts with different domains of the 23S rRNA in the assembled 50S subunit and ribosome. Functionally, forms part of the polypeptide exit tunnel. This Helicobacter hepaticus (strain ATCC 51449 / 3B1) protein is Large ribosomal subunit protein uL4.